Reading from the N-terminus, the 350-residue chain is Protein SGT1 homolog A (350 aa).

TPR repeat units lie at residues 2-35 (AKELADKAKEAFVDDDFDVAVDLYSKAIDLDPNC), 37-69 (EFFADRAQAYIKLESFTEAVADANKAIELDPSL), and 71-103 (KAYLRKGTACMKLEEYRTAKTALEKGASITPSE). The CS domain occupies 149 to 238 (TAKYRHEYYQ…ADIITWASLE (90 aa)). Residues 260–350 (AYPSSKKVKD…DGMELKKWEI (91 aa)) enclose the SGS domain.

Belongs to the SGT1 family. As to quaternary structure, interacts with RAR1. Forms a ternary complex with RAR1 and barley HSP90.

In terms of biological role, functions in R gene-mediated resistance, but participates in a lower extent than SGT1B to RPP5-mediated resistance. Not required for RPM1, RPS2, RPS4 and RPS5-mediated resistance. Probably required for SCF-mediated ubiquitination, by coupling HSP90 to SCF complex for ubiquitination of HSP90 client proteins. This chain is Protein SGT1 homolog A (SGT1A), found in Arabidopsis thaliana (Mouse-ear cress).